The following is a 645-amino-acid chain: Acetyl-coenzyme A synthetase (645 aa).

CoA contacts are provided by residues 190-193 (RGGR) and T308. Residues 384–386 (GEP), 408–413 (DTWWQT), D497, and R512 each bind ATP. S520 provides a ligand contact to CoA. R523 lines the ATP pocket. 3 residues coordinate Mg(2+): V534, H536, and V539. K606 carries the post-translational modification N6-acetyllysine.

Belongs to the ATP-dependent AMP-binding enzyme family. Requires Mg(2+) as cofactor. Post-translationally, acetylated. Deacetylation by the SIR2-homolog deacetylase activates the enzyme.

The catalysed reaction is acetate + ATP + CoA = acetyl-CoA + AMP + diphosphate. Catalyzes the conversion of acetate into acetyl-CoA (AcCoA), an essential intermediate at the junction of anabolic and catabolic pathways. AcsA undergoes a two-step reaction. In the first half reaction, AcsA combines acetate with ATP to form acetyl-adenylate (AcAMP) intermediate. In the second half reaction, it can then transfer the acetyl group from AcAMP to the sulfhydryl group of CoA, forming the product AcCoA. In Saccharophagus degradans (strain 2-40 / ATCC 43961 / DSM 17024), this protein is Acetyl-coenzyme A synthetase.